Reading from the N-terminus, the 138-residue chain is Large ribosomal subunit protein mL54 (138 aa).

Residues 1-14 constitute a mitochondrion transit peptide; it reads MATKRLFGATRTWA.

Belongs to the mitochondrion-specific ribosomal protein mL54 family. In terms of assembly, component of the mitochondrial large ribosomal subunit (mt-LSU). Mature mammalian 55S mitochondrial ribosomes consist of a small (28S) and a large (39S) subunit. The 28S small subunit contains a 12S ribosomal RNA (12S mt-rRNA) and 30 different proteins. The 39S large subunit contains a 16S rRNA (16S mt-rRNA), a copy of mitochondrial valine transfer RNA (mt-tRNA(Val)), which plays an integral structural role, and 52 different proteins.

The protein localises to the mitochondrion. The sequence is that of Large ribosomal subunit protein mL54 (MRPL54) from Homo sapiens (Human).